Here is a 342-residue protein sequence, read N- to C-terminus: Autoinducer 2 import system permease protein LsrC (342 aa).

Topologically, residues 1 to 13 are periplasmic; sequence MLKFIQNNREITA. Residues 14–34 form a helical membrane-spanning segment; sequence LLAVVLLFVLPGFLDRQYLSV. Residues 35–38 lie on the Cytoplasmic side of the membrane; the sequence is QTLT. Residues 39-59 traverse the membrane as a helical segment; the sequence is MVYSSAQILILLAMGATLVML. Topologically, residues 60–69 are periplasmic; that stretch reads TRNIDVSVGS. Residues 70–90 traverse the membrane as a helical segment; the sequence is ITGMCAVLLGMLLNAGYSLPV. Residues 91–92 lie on the Cytoplasmic side of the membrane; sequence AC. Residues 93–113 form a helical membrane-spanning segment; it reads VATLLLGLLAGFFNGVLVAWL. Lys-114 is a topological domain (periplasmic). Residues 115–135 form a helical membrane-spanning segment; the sequence is IPAIVATLGTLGLYRGIMLLW. Topologically, residues 136–154 are cytoplasmic; it reads TGGKWIEGLPAELKQLSAP. The helical transmembrane segment at 155-175 threads the bilayer; the sequence is LLLGVSAIGWLTIILVAFMAW. The Periplasmic segment spans residues 176–212; that stretch reads LLAKTAFGRSFYATGDNLQGARQLGVRTEAIRIVAFS. A helical transmembrane segment spans residues 213-233; the sequence is LNGCMAALAGIVFASQIGFIP. Over 234–251 the chain is Cytoplasmic; it reads NQTGTGLEMKAIAACVLG. A helical transmembrane segment spans residues 252 to 272; it reads GISLLGGSGAIIGAVLGAWFL. Residues 273–283 are Periplasmic-facing; the sequence is TQIDSVLVLLR. A helical membrane pass occupies residues 284 to 304; it reads IPAWWNDFIAGLVLLAVLVFD. Topologically, residues 305–342 are cytoplasmic; the sequence is GRLRCALERNLRRQKYARFMTPPPSVKPASSGKKREAA.

Belongs to the binding-protein-dependent transport system permease family. AraH/RbsC subfamily. In terms of assembly, the complex is composed of two ATP-binding proteins (LsrA), two transmembrane proteins (LsrC and LsrD) and a solute-binding protein (LsrB).

Its subcellular location is the cell inner membrane. Part of the ABC transporter complex LsrABCD involved in autoinducer 2 (AI-2) import. Probably responsible for the translocation of the substrate across the membrane. This Escherichia coli (strain K12 / DH10B) protein is Autoinducer 2 import system permease protein LsrC (lsrC).